A 360-amino-acid chain; its full sequence is UDP-N-acetylglucosamine--N-acetylmuramyl-(pentapeptide) pyrophosphoryl-undecaprenol N-acetylglucosamine transferase (360 aa).

UDP-N-acetyl-alpha-D-glucosamine contacts are provided by residues 11–13, N117, R160, S192, and Q294; that span reads TGG.

It belongs to the glycosyltransferase 28 family. MurG subfamily.

It localises to the cell inner membrane. The catalysed reaction is di-trans,octa-cis-undecaprenyl diphospho-N-acetyl-alpha-D-muramoyl-L-alanyl-D-glutamyl-meso-2,6-diaminopimeloyl-D-alanyl-D-alanine + UDP-N-acetyl-alpha-D-glucosamine = di-trans,octa-cis-undecaprenyl diphospho-[N-acetyl-alpha-D-glucosaminyl-(1-&gt;4)]-N-acetyl-alpha-D-muramoyl-L-alanyl-D-glutamyl-meso-2,6-diaminopimeloyl-D-alanyl-D-alanine + UDP + H(+). The protein operates within cell wall biogenesis; peptidoglycan biosynthesis. Cell wall formation. Catalyzes the transfer of a GlcNAc subunit on undecaprenyl-pyrophosphoryl-MurNAc-pentapeptide (lipid intermediate I) to form undecaprenyl-pyrophosphoryl-MurNAc-(pentapeptide)GlcNAc (lipid intermediate II). This chain is UDP-N-acetylglucosamine--N-acetylmuramyl-(pentapeptide) pyrophosphoryl-undecaprenol N-acetylglucosamine transferase, found in Rickettsia felis (strain ATCC VR-1525 / URRWXCal2) (Rickettsia azadi).